Consider the following 338-residue polypeptide: Phenylalanine--tRNA ligase alpha subunit (338 aa).

The segment at 71–101 (QFEEKRSSLSQQTSSSDTYQSLPDLTLPGRQ) is disordered. A compositionally biased stretch (low complexity) spans 78–92 (SLSQQTSSSDTYQSL). A Mg(2+)-binding site is contributed by Glu253.

The protein belongs to the class-II aminoacyl-tRNA synthetase family. Phe-tRNA synthetase alpha subunit type 1 subfamily. Tetramer of two alpha and two beta subunits. It depends on Mg(2+) as a cofactor.

It localises to the cytoplasm. The catalysed reaction is tRNA(Phe) + L-phenylalanine + ATP = L-phenylalanyl-tRNA(Phe) + AMP + diphosphate + H(+). The protein is Phenylalanine--tRNA ligase alpha subunit of Desulfotalea psychrophila (strain LSv54 / DSM 12343).